We begin with the raw amino-acid sequence, 756 residues long: Subtilisin-like protease SBT3.9 (756 aa).

Residues 1-25 (MSKTILFLALFLSIVLNVQISFVVA) form the signal peptide. Residues 26–108 (ESKVYVVYLG…VIPNTLYEMT (83 aa)) constitute a propeptide, activation peptide. The Inhibitor I9 domain maps to 29 to 106 (VYVVYLGEKE…VQVIPNTLYE (78 aa)). The 492-residue stretch at 112 to 603 (TWDYLGVSPG…GGLINPEKAV (492 aa)) folds into the Peptidase S8 domain. The active-site Charge relay system is D142. N175 and N202 each carry an N-linked (GlcNAc...) asparagine glycan. The active-site Charge relay system is the H218. Residues N233, N357, N395, and N519 are each glycosylated (N-linked (GlcNAc...) asparagine). The PA domain maps to 386-460 (DCEKLSANPN…ELGTDILFYI (75 aa)). The active-site Charge relay system is S534.

It belongs to the peptidase S8 family.

It localises to the secreted. In Arabidopsis thaliana (Mouse-ear cress), this protein is Subtilisin-like protease SBT3.9.